The chain runs to 617 residues: Chaperone protein HscA homolog (617 aa).

The protein belongs to the heat shock protein 70 family.

Functionally, chaperone involved in the maturation of iron-sulfur cluster-containing proteins. Has a low intrinsic ATPase activity which is markedly stimulated by HscB. The sequence is that of Chaperone protein HscA homolog from Actinobacillus pleuropneumoniae serotype 5b (strain L20).